Reading from the N-terminus, the 74-residue chain is uncharacterized protein (74 aa).

The helical transmembrane segment at 54 to 72 (LIIPRFLLLIYSVIQCLFL) threads the bilayer.

Its subcellular location is the membrane. This is an uncharacterized protein from Saccharomyces cerevisiae (strain ATCC 204508 / S288c) (Baker's yeast).